We begin with the raw amino-acid sequence, 85 residues long: Growth factor (85 aa).

An N-terminal signal peptide occupies residues 1–19 (MVPRDLVATLLCAMCIVQA). Positions 33–77 (RIKLCNDDYKNYCLNNGTCFTVALNNVSLNPFCACHINYVGSRCQ) constitute an EGF-like domain. Disulfide bonds link C37–C51, C45–C65, and C67–C76. Residues N48 and N58 are each glycosylated (N-linked (GlcNAc...) asparagine; by host).

It localises to the secreted. Functionally, stimulates the growth of some tissues. The protein is Growth factor (MGF) of Oryctolagus cuniculus (Rabbit).